A 313-amino-acid chain; its full sequence is Protoheme IX farnesyltransferase (313 aa).

The next 9 helical transmembrane spans lie at leucine 35–leucine 55, alanine 56–tryptophan 76, valine 98–leucine 118, isoleucine 120–isoleucine 140, isoleucine 153–glycine 173, methionine 180–phenylalanine 200, isoleucine 226–phenylalanine 246, alanine 248–valine 268, and phenylalanine 285–valine 305.

Belongs to the UbiA prenyltransferase family. Protoheme IX farnesyltransferase subfamily.

The protein resides in the cell inner membrane. The enzyme catalyses heme b + (2E,6E)-farnesyl diphosphate + H2O = Fe(II)-heme o + diphosphate. The protein operates within porphyrin-containing compound metabolism; heme O biosynthesis; heme O from protoheme: step 1/1. Its function is as follows. Converts heme B (protoheme IX) to heme O by substitution of the vinyl group on carbon 2 of heme B porphyrin ring with a hydroxyethyl farnesyl side group. This chain is Protoheme IX farnesyltransferase, found in Rhodopseudomonas palustris (strain BisB18).